A 227-amino-acid chain; its full sequence is 2-C-methyl-D-erythritol 4-phosphate cytidylyltransferase (227 aa).

Belongs to the IspD/TarI cytidylyltransferase family. IspD subfamily.

The enzyme catalyses 2-C-methyl-D-erythritol 4-phosphate + CTP + H(+) = 4-CDP-2-C-methyl-D-erythritol + diphosphate. The protein operates within isoprenoid biosynthesis; isopentenyl diphosphate biosynthesis via DXP pathway; isopentenyl diphosphate from 1-deoxy-D-xylulose 5-phosphate: step 2/6. Catalyzes the formation of 4-diphosphocytidyl-2-C-methyl-D-erythritol from CTP and 2-C-methyl-D-erythritol 4-phosphate (MEP). The protein is 2-C-methyl-D-erythritol 4-phosphate cytidylyltransferase of Bordetella bronchiseptica (strain ATCC BAA-588 / NCTC 13252 / RB50) (Alcaligenes bronchisepticus).